A 172-amino-acid chain; its full sequence is Translationally-controlled tumor protein homolog (172 aa).

The region spanning 1–172 (MKIYKDIITG…FKHGLDEEKC (172 aa)) is the TCTP domain.

The protein belongs to the TCTP family.

It is found in the cytoplasm. Functionally, involved in calcium binding and microtubule stabilization. The sequence is that of Translationally-controlled tumor protein homolog from Drosophila yakuba (Fruit fly).